The following is a 1147-amino-acid chain: Cellulose synthase-like protein D3 (1147 aa).

Disordered stretches follow at residues 1 to 33 (MSTGPGKKAIRNAGGVGGGAGPSAGGPRGPAGQ) and 259 to 281 (KLGGDGGGGGGGGPLPEQKPFKP). 2 stretches are compositionally biased toward gly residues: residues 14–29 (GGVGGGAGPSAGGPRG) and 262–272 (GDGGGGGGGGP). Helical transmembrane passes span 292 to 312 (VISPYRIFIVIRMFVLLFYLT) and 322 to 342 (ALWLWGMSIVCELWFAFSWLL). Residues Asp422 and Asp847 contribute to the active site. 6 helical membrane-spanning segments follow: residues 929–949 (IFLLVYCFIPALSLFSGFFIV), 954–974 (IAFLCYLLTMTITLVALGILE), 1001–1021 (LYAVVQGLLKVMAGIEISFTL), 1045–1065 (LLIPPITIGMVNIIAIAFAFA), 1075–1095 (WGKFIGGGFFSFWVLAHLNPF), and 1108–1128 (TIVFVWSGLLSITVSLLWVAI).

This sequence belongs to the glycosyltransferase 2 family. Plant cellulose synthase-like D subfamily.

It localises to the golgi apparatus membrane. Functionally, thought to be a Golgi-localized beta-glycan synthase that polymerize the backbones of noncellulosic polysaccharides (hemicelluloses) of plant cell wall. The protein is Cellulose synthase-like protein D3 (CSLD3) of Oryza sativa subsp. japonica (Rice).